Here is a 171-residue protein sequence, read N- to C-terminus: uncharacterized protein (171 aa).

The HTH gntR-type domain occupies 30–97; it reads AGRVSAAYHA…PKKGIIICAL (68 aa). The segment at residues 57–76 is a DNA-binding region (H-T-H motif); the sequence is EIEIARQLGMSRTPVHEAMA.

This is an uncharacterized protein from Agrobacterium vitis (Rhizobium vitis).